Here is a 313-residue protein sequence, read N- to C-terminus: MSQEFAHLSVLLAETVGGLNIKDDGIYIDGTFGRGGHSRQILQRLGDNGRLIAIDRDPQAIEAAKQFSDDPRFQIVHGGFGQLADYVEDLGLVGKIDGVLLDLGVSSPQLDDAERGFSFLRDGPLDMRMDNSQGQTAAQWLAHAEIEDMAWVFKTYGEEKNARHIARCIAADRDKTPFLRTKDLADLIARITKNKERNKHPATRVFQAIRIYINSELDQIDQALEGALAVLAPQGRLSIISFHSLEDRIVKRFIRRHSQGESVPYGLPITEDQINKSRKLRAIGKAIMPSDEEIERNARARSSVLRIAERLDY.

S-adenosyl-L-methionine is bound by residues 35–37, aspartate 55, phenylalanine 80, aspartate 102, and glutamine 109; that span reads GGH.

It belongs to the methyltransferase superfamily. RsmH family.

Its subcellular location is the cytoplasm. The catalysed reaction is cytidine(1402) in 16S rRNA + S-adenosyl-L-methionine = N(4)-methylcytidine(1402) in 16S rRNA + S-adenosyl-L-homocysteine + H(+). Its function is as follows. Specifically methylates the N4 position of cytidine in position 1402 (C1402) of 16S rRNA. In Shewanella putrefaciens (strain CN-32 / ATCC BAA-453), this protein is Ribosomal RNA small subunit methyltransferase H.